Reading from the N-terminus, the 520-residue chain is Arginine biosynthesis bifunctional protein ArgJ, chloroplastic (520 aa).

Residues Thr-264, Lys-290, Thr-301, Glu-388, Asn-515, and Thr-520 each contribute to the substrate site. Residue Thr-301 is the Nucleophile of the active site.

The protein belongs to the ArgJ family. As to quaternary structure, heterodimer of an alpha and a beta chain.

The protein localises to the plastid. The protein resides in the chloroplast. The enzyme catalyses N(2)-acetyl-L-ornithine + L-glutamate = N-acetyl-L-glutamate + L-ornithine. It carries out the reaction L-glutamate + acetyl-CoA = N-acetyl-L-glutamate + CoA + H(+). The protein operates within amino-acid biosynthesis; L-arginine biosynthesis; L-ornithine and N-acetyl-L-glutamate from L-glutamate and N(2)-acetyl-L-ornithine (cyclic): step 1/1. It functions in the pathway amino-acid biosynthesis; L-arginine biosynthesis; N(2)-acetyl-L-ornithine from L-glutamate: step 1/4. In terms of biological role, catalyzes two activities which are involved in the cyclic version of arginine biosynthesis: the synthesis of acetylglutamate from glutamate and acetyl-CoA, and of ornithine by transacetylation between acetylornithine and glutamate. This chain is Arginine biosynthesis bifunctional protein ArgJ, chloroplastic, found in Physcomitrium patens (Spreading-leaved earth moss).